The following is a 385-amino-acid chain: Glycerol-3-phosphate dehydrogenase [NAD(+)] 1 (385 aa).

Residues 29–34 (GSGNWG), Phe-121, Lys-144, and Ala-177 each bind NAD(+). Lys-144 is a binding site for substrate. Lys-232 (proton acceptor) is an active-site residue. NAD(+)-binding residues include Arg-296 and Gln-325. 296–297 (RN) contacts substrate. Ser-376 is modified (phosphoserine). Thr-382 carries the post-translational modification Phosphothreonine.

The protein belongs to the NAD-dependent glycerol-3-phosphate dehydrogenase family.

It localises to the cytoplasm. It carries out the reaction sn-glycerol 3-phosphate + NAD(+) = dihydroxyacetone phosphate + NADH + H(+). The protein is Glycerol-3-phosphate dehydrogenase [NAD(+)] 1 (gpd1) of Schizosaccharomyces pombe (strain 972 / ATCC 24843) (Fission yeast).